The sequence spans 136 residues: Small ribosomal subunit protein uS9 (136 aa).

This sequence belongs to the universal ribosomal protein uS9 family.

In Synechococcus sp. (strain JA-2-3B'a(2-13)) (Cyanobacteria bacterium Yellowstone B-Prime), this protein is Small ribosomal subunit protein uS9.